The sequence spans 285 residues: Phosphatidylserine decarboxylase proenzyme (285 aa).

Residues aspartate 89, histidine 146, and serine 252 each act as charge relay system; for autoendoproteolytic cleavage activity in the active site. The active-site Schiff-base intermediate with substrate; via pyruvic acid; for decarboxylase activity is serine 252. Serine 252 carries the pyruvic acid (Ser); by autocatalysis modification.

Belongs to the phosphatidylserine decarboxylase family. PSD-B subfamily. Prokaryotic type I sub-subfamily. Heterodimer of a large membrane-associated beta subunit and a small pyruvoyl-containing alpha subunit. The cofactor is pyruvate. In terms of processing, is synthesized initially as an inactive proenzyme. Formation of the active enzyme involves a self-maturation process in which the active site pyruvoyl group is generated from an internal serine residue via an autocatalytic post-translational modification. Two non-identical subunits are generated from the proenzyme in this reaction, and the pyruvate is formed at the N-terminus of the alpha chain, which is derived from the carboxyl end of the proenzyme. The autoendoproteolytic cleavage occurs by a canonical serine protease mechanism, in which the side chain hydroxyl group of the serine supplies its oxygen atom to form the C-terminus of the beta chain, while the remainder of the serine residue undergoes an oxidative deamination to produce ammonia and the pyruvoyl prosthetic group on the alpha chain. During this reaction, the Ser that is part of the protease active site of the proenzyme becomes the pyruvoyl prosthetic group, which constitutes an essential element of the active site of the mature decarboxylase.

The protein localises to the cell membrane. The enzyme catalyses a 1,2-diacyl-sn-glycero-3-phospho-L-serine + H(+) = a 1,2-diacyl-sn-glycero-3-phosphoethanolamine + CO2. The protein operates within phospholipid metabolism; phosphatidylethanolamine biosynthesis; phosphatidylethanolamine from CDP-diacylglycerol: step 2/2. In terms of biological role, catalyzes the formation of phosphatidylethanolamine (PtdEtn) from phosphatidylserine (PtdSer). In Vibrio campbellii (strain ATCC BAA-1116), this protein is Phosphatidylserine decarboxylase proenzyme.